Consider the following 307-residue polypeptide: MQHNRYLKWFAVAATVGMLLILLGGALVTKTDSGLGCGRNWPDCNGSLIPKEITPEVLIEFSHRLVTGVVSISILVLTVWTWRKLGHIREVKLLGFLAMFFLIAQALIGAAQVLWGQGDFILALHFGISLISFAAVLLLSMIVFEVDRKFDADNVFIGKKLRWHTIAVTIYSYLVVYTGALVRHTDSSLICPDWPFCYNETPLASPNNMYEWVQMGHRLAVLIIFIWIAYITWHAVKEYKNQRVVYYGWIIAFTIVFLQVIAGMLVVLTKLNLTVALMHSLLISLLFGLLCYMIMLVARSNYNEKMK.

The Cytoplasmic segment spans residues 1–8 (MQHNRYLK). The chain crosses the membrane as a helical span at residues 9–29 (WFAVAATVGMLLILLGGALVT). Topologically, residues 30-56 (KTDSGLGCGRNWPDCNGSLIPKEITPE) are extracellular. An intrachain disulfide couples cysteine 37 to cysteine 44. The chain crosses the membrane as a helical span at residues 57-77 (VLIEFSHRLVTGVVSISILVL). Glutamate 60 is an active-site residue. Histidine 63 lines the heme o pocket. Over 78-92 (TVWTWRKLGHIREVK) the chain is Cytoplasmic. Residues 93-113 (LLGFLAMFFLIAQALIGAAQV) form a helical membrane-spanning segment. The Extracellular segment spans residues 114–123 (LWGQGDFILA). The chain crosses the membrane as a helical span at residues 124–144 (LHFGISLISFAAVLLLSMIVF). Histidine 125 contacts heme o. Topologically, residues 145–161 (EVDRKFDADNVFIGKKL) are cytoplasmic. A helical transmembrane segment spans residues 162–182 (RWHTIAVTIYSYLVVYTGALV). Topologically, residues 183–218 (RHTDSSLICPDWPFCYNETPLASPNNMYEWVQMGHR) are extracellular. An intrachain disulfide couples cysteine 191 to cysteine 197. Position 217 (histidine 217) interacts with heme b. Residues 219-239 (LAVLIIFIWIAYITWHAVKEY) form a helical membrane-spanning segment. The Cytoplasmic portion of the chain corresponds to 240 to 247 (KNQRVVYY). The helical transmembrane segment at 248 to 268 (GWIIAFTIVFLQVIAGMLVVL) threads the bilayer. Residues 269–276 (TKLNLTVA) are Extracellular-facing. The chain crosses the membrane as a helical span at residues 277 to 297 (LMHSLLISLLFGLLCYMIMLV). Histidine 279 is a heme b binding site. The Cytoplasmic segment spans residues 298 to 307 (ARSNYNEKMK).

It belongs to the COX15/CtaA family. Type 1 subfamily. In terms of assembly, interacts with CtaB. The cofactor is heme b.

It localises to the cell membrane. The catalysed reaction is Fe(II)-heme o + 2 A + H2O = Fe(II)-heme a + 2 AH2. The protein operates within porphyrin-containing compound metabolism; heme A biosynthesis; heme A from heme O: step 1/1. Its function is as follows. Catalyzes the conversion of heme O to heme A by two successive hydroxylations of the methyl group at C8. The first hydroxylation forms heme I, the second hydroxylation results in an unstable dihydroxymethyl group, which spontaneously dehydrates, resulting in the formyl group of heme A. The protein is Heme A synthase of Lysinibacillus sphaericus (strain C3-41).